Reading from the N-terminus, the 142-residue chain is MTLTDSDKAAVVALWGKIAPQANAIGAEALERLFLSYPQTKTYFSHFDLSHGSADLANHGGKVVNALGEAAKHIDDLDAALSTLSDLHAYNLRVDPGNFKLLSHTIQVTLAIHFHKEFDAATQAAWDKFLAEVATVLTSKYR.

The Globin domain occupies 2-142 (TLTDSDKAAV…VATVLTSKYR (141 aa)). Residue His59 coordinates O2. Residue His88 coordinates heme b.

This sequence belongs to the globin family. Heterotetramer of two alpha chains and two beta chains. In terms of tissue distribution, red blood cells.

Functionally, this is a larval (tadpole) alpha-globin. This is Hemoglobin subunit alpha-3 (hba3) from Xenopus laevis (African clawed frog).